Consider the following 540-residue polypeptide: Chaperonin GroEL (540 aa).

ATP is bound by residues 29–32, 86–90, Gly413, 476–478, and Asp492; these read TLGP, DGTTT, and NAA.

This sequence belongs to the chaperonin (HSP60) family. As to quaternary structure, forms a cylinder of 14 subunits composed of two heptameric rings stacked back-to-back. Interacts with the co-chaperonin GroES.

It is found in the cytoplasm. It catalyses the reaction ATP + H2O + a folded polypeptide = ADP + phosphate + an unfolded polypeptide.. Functionally, together with its co-chaperonin GroES, plays an essential role in assisting protein folding. The GroEL-GroES system forms a nano-cage that allows encapsulation of the non-native substrate proteins and provides a physical environment optimized to promote and accelerate protein folding. The sequence is that of Chaperonin GroEL from Streptococcus sanguinis.